Consider the following 339-residue polypeptide: Biotin synthase (339 aa).

In terms of domain architecture, Radical SAM core spans 51–278 (TEVELATLLS…KARVRLSAGR (228 aa)). The [4Fe-4S] cluster site is built by C66, C70, and C73. [2Fe-2S] cluster is bound by residues C110, C141, C201, and R273.

This sequence belongs to the radical SAM superfamily. Biotin synthase family. Homodimer. Requires [4Fe-4S] cluster as cofactor. It depends on [2Fe-2S] cluster as a cofactor.

It catalyses the reaction (4R,5S)-dethiobiotin + (sulfur carrier)-SH + 2 reduced [2Fe-2S]-[ferredoxin] + 2 S-adenosyl-L-methionine = (sulfur carrier)-H + biotin + 2 5'-deoxyadenosine + 2 L-methionine + 2 oxidized [2Fe-2S]-[ferredoxin]. It participates in cofactor biosynthesis; biotin biosynthesis; biotin from 7,8-diaminononanoate: step 2/2. In terms of biological role, catalyzes the conversion of dethiobiotin (DTB) to biotin by the insertion of a sulfur atom into dethiobiotin via a radical-based mechanism. The polypeptide is Biotin synthase (Janthinobacterium sp. (strain Marseille) (Minibacterium massiliensis)).